The following is a 443-amino-acid chain: Differentially expressed in FDCP 8 homolog A (443 aa).

The segment at Met-1–Glu-49 is disordered. Phorbol-ester/DAG-type zinc fingers lie at residues Glu-134–Cys-185 and Ile-364–Cys-424.

Belongs to the DEF8 family.

Positively regulates lysosome peripheral distribution and ruffled border formation in osteoclasts. Involved in bone resorption. This is Differentially expressed in FDCP 8 homolog A (def8-a) from Xenopus laevis (African clawed frog).